The following is a 280-amino-acid chain: Transcription factor HES-1 (280 aa).

Residues 1-44 (MPADIMEKNSSSPVAATPASVNTTPDKPKTASEHRKSSKPIMEK) form a disordered region. The span at 10-21 (SSSPVAATPASV) shows a compositional bias: low complexity. Residues 26 to 35 (DKPKTASEHR) show a composition bias toward basic and acidic residues. A bHLH domain is found at 34–91 (HRKSSKPIMEKRRRARINESLSQLKTLILDALKKDSSRHSKLEKADILEMTVKHLRNL). The Orange domain occupies 110-143 (YRAGFSECMNEVTRFLSTCEGVNTEVRTRLLGHL). 2 disordered regions span residues 157-200 (GQPH…PPGG) and 254-280 (TSVG…PWRN). Pro residues-rich tracts occupy residues 164-174 (QAPPPPPPGPG) and 181-200 (FAPP…PPGG). A compositionally biased stretch (polar residues) spans 254–271 (TSVGPNAVSPSSGPSLTA). The WRPW motif signature appears at 275–278 (WRPW).

Transcription repression requires formation of a complex with a corepressor protein of the Groucho/TLE family. Interacts (via WPRW motif) with TLE1, and more weakly with TLE2. Interacts with HES6. Interacts with SIRT1. Interacts with an FA complex, composed of FANCA, FANCF, FANCG and FANCL, but not of FANCC, nor FANCE. Post-translationally, (Microbial infection) Ubiquitinated via human cytomegalovirus/HCMV protein IE1 that assembles a HES1 ubiquitination complex; leading to HES1 proteasomal degradation.

Its subcellular location is the nucleus. Its function is as follows. Transcriptional repressor of genes that require a bHLH protein for their transcription. May act as a negative regulator of myogenesis by inhibiting the functions of MYOD1 and ASH1. Binds DNA on N-box motifs: 5'-CACNAG-3' with high affinity and on E-box motifs: 5'-CANNTG-3' with low affinity. May play a role in a functional FA core complex response to DNA cross-link damage, being required for the stability and nuclear localization of FA core complex proteins, as well as for FANCD2 monoubiquitination in response to DNA damage. In Homo sapiens (Human), this protein is Transcription factor HES-1 (HES1).